Reading from the N-terminus, the 623-residue chain is Membrane protein insertase YidC (623 aa).

The chain crosses the membrane as a helical span at residues 8–28; that stretch reads LILATGLSFLVIMVWFFLFPP. Residues 33-64 form a disordered region; that stretch reads TEGEPTVATQQTAVAPSATPDAPTTAVPPDAD. A compositionally biased stretch (low complexity) spans 44 to 62; that stretch reads TAVAPSATPDAPTTAVPPD. The next 4 helical transmembrane spans lie at 379-399, 449-469, 507-527, and 543-563; these read MGLA…PLAY, LPIL…FVTI, TTMA…SMWL, and IFAW…SGLV. A compositionally biased stretch (low complexity) spans 601–617; that stretch reads KPAAQPAGKAANDGAAP. The segment at 601-623 is disordered; the sequence is KPAAQPAGKAANDGAAPAKKRKP.

This sequence belongs to the OXA1/ALB3/YidC family. Type 1 subfamily. Interacts with the Sec translocase complex via SecD. Specifically interacts with transmembrane segments of nascent integral membrane proteins during membrane integration.

The protein resides in the cell inner membrane. Required for the insertion and/or proper folding and/or complex formation of integral membrane proteins into the membrane. Involved in integration of membrane proteins that insert both dependently and independently of the Sec translocase complex, as well as at least some lipoproteins. Aids folding of multispanning membrane proteins. The chain is Membrane protein insertase YidC from Cereibacter sphaeroides (strain KD131 / KCTC 12085) (Rhodobacter sphaeroides).